The primary structure comprises 437 residues: MELNGPPVSQLPQTATSTASLPVTVAGTLLRGPQLLLRAAEKYPRTPKCARCRNHGVVSALKGHKRYCRWKDCMCAKCTLIAERQRVMAAQVALRRQQAQEENEARELQLLYGTAEGLALAAANGIIPPRPAYEVFGSVCTEGGTDSKIQKFDLFPKSLIPRSVTPQLSSGGKPVSPDSESVSGSAPGASSPEARPGSGSENGDGESLLSSPISKALKEGEESPSSISPLGSESGSDAEKDEQDPSSSSSARQRTPIDILTRVFPAQKRSVLELVLQGCGGDVVQAIEQILNNRGQDKSEETWSRDGALPSIQPSVSSTHRPLIAGALTPAIGTLGSRSAFSPLQPNGAHFGTEANAYQLGGHLGLNPLRLAYSAHSRGLAFMAPYSTAGFMPTLGFRPPMDYAFSDLMRDRANVHKDQVYTNGLYGPVVNNNAEKQ.

A DNA-binding region (DM) is located at residues 49–96 (CARCRNHGVVSALKGHKRYCRWKDCMCAKCTLIAERQRVMAAQVALRR). Disordered stretches follow at residues 163–254 (SVTP…ARQR) and 297–317 (DKSE…PSVS). Low complexity-rich tracts occupy residues 179-201 (SESV…SGSE) and 223-235 (SPSS…SESG). One can recognise a DMA domain in the interval 254–289 (RTPIDILTRVFPAQKRSVLELVLQGCGGDVVQAIEQ).

The protein belongs to the DMRT family.

It localises to the nucleus. May be involved in sexual development. This Xenopus tropicalis (Western clawed frog) protein is Doublesex- and mab-3-related transcription factor A2 (dmrta2).